The following is a 399-amino-acid chain: Forkhead box protein A4-A (399 aa).

Residues 119–213 constitute a DNA-binding region (fork-head); it reads KPPYSYISLI…ENGCYLRRQK (95 aa). Basic and acidic residues predominate over residues 219–234; it reads RSKSGEGEKKVNKPGE. Positions 219 to 290 are disordered; that stretch reads RSKSGEGEKK…VGLSPTSEQA (72 aa). Polar residues predominate over residues 267-277; sequence STGSSIHQACG.

As to expression, during stages 8.5 to 10, expressed in the part of the dorsal mesoderm invaginating the dorsal blastopore lip (Spemann organizer), as a direct response to dorsal mesodermal induction. At stage 12 (mid-gastrulation), restricted to the dorsal midline in the deeper layers of mesodermal cells. Continuously present in the posterior portion of invaginated mesoderm and expressed within the notochord. Also present in the midline of the neural plate during gastrulation, but absent from the notoplate in exogastrula embryos. Expression in the notochord continues in neurula-stage embryos and at stage 20 in addition to the notochord, expression is seen in the pharyngeal endoderm.

It localises to the nucleus. Its function is as follows. Transcriptional repressor involved in embryonic nervous system development. Plays a role in the induction and patterning of the anterior-posterior neural axis. Involved in the establishment of floor plate differentiation from neural plate cells during gastrulation. Binds the anf1 promoter sequence to restrict expression of anf1 to the anterior of the neural plate, thereby patterning the forebrain. Can bind to the HNF-3-alpha DNA target sequence. Cooperates with t/bra in a dose-dependent manner to specify dorsal mesoderm formation, including notochord. Binds to DNA via the target sequence 5'-[GA]TAAA[TC]A-3', with 5'-GTAAATA-3' being the preferred binding site. This is Forkhead box protein A4-A (foxa4-a) from Xenopus laevis (African clawed frog).